We begin with the raw amino-acid sequence, 328 residues long: POU domain, class 5, transcription factor 2 (328 aa).

Residues Met1 to Met25 form a disordered region. Residues Asp118 to Glu192 form the POU-specific domain. The segment at residues Gly210–Thr269 is a DNA-binding region (homeobox).

It belongs to the POU transcription factor family. Class-5 subfamily. Expressed in skeletal and cardiac muscles, brain, heart and lung. Little or no detectable expression found in pancreas, kidney, liver or placenta.

The protein resides in the nucleus. Its function is as follows. Transcription factor that binds preferentially to the octamer motif (5'-ATGTTAAT-3'). May exert a regulatory function in meiotic events that are required for terminal differentiation of male germ cell. The sequence is that of POU domain, class 5, transcription factor 2 (POU5F2) from Homo sapiens (Human).